The following is a 558-amino-acid chain: Phosphatidylserine lipase ABHD16A (558 aa).

2 helical membrane-spanning segments follow: residues isoleucine 60–phenylalanine 80 and valine 93–leucine 113. The Cytoplasmic segment spans residues arginine 114–leucine 558. In terms of domain architecture, AB hydrolase-1 spans leucine 281–leucine 407. Residues serine 355, aspartate 430, and histidine 507 each act as charge relay system in the active site.

The protein belongs to the AB hydrolase superfamily. ABHD16 family.

The protein resides in the membrane. The enzyme catalyses 1-heptadecanoyl-2-(5Z,8Z,11Z,14Z-eicosatetraenoyl)-sn-glycero-3-phosphoserine + H2O = 1-heptadecanoyl-sn-glycero-3-phosphoserine + (5Z,8Z,11Z,14Z)-eicosatetraenoate + H(+). It catalyses the reaction 1-hexadecanoyl-2-(9Z-octadecenoyl)-sn-glycero-3-phospho-L-serine + H2O = 1-hexadecanoyl-sn-glycero-3-phospho-L-serine + (9Z)-octadecenoate + H(+). The catalysed reaction is 1-octadecanoyl-2-(9Z,12Z-octadecadienoyl)-sn-glycero-3-phosphoserine + H2O = 1-octadecanoyl-sn-glycero-3-phosphoserine + (9Z,12Z)-octadecadienoate + H(+). It carries out the reaction 1-heptadecanoyl-2-(5Z,8Z,11Z,14Z-eicosatetraenoyl)-sn-glycero-3-phosphocholine + H2O = 1-heptadecanoyl-sn-glycero-3-phosphocholine + (5Z,8Z,11Z,14Z)-eicosatetraenoate + H(+). The enzyme catalyses 1-hexadecanoyl-2-(9Z-octadecenoyl)-sn-glycero-3-phosphoglycerol + H2O = 1-hexadecanoyl-sn-glycero-3-phosphoglycerol + (9Z)-octadecenoate + H(+). It catalyses the reaction 1-hexadecanoyl-2-(9Z-octadecenoyl)-sn-glycero-3-phospho-(1D-myo-inositol) + H2O = 1-hexadecanoyl-sn-glycero-3-phospho-(1D-myo-inositol) + (9Z)-octadecenoate + H(+). The catalysed reaction is 1-heptadecanoyl-2-(5Z,8Z,11Z,14Z-eicosatetraenoyl)-sn-glycero-3-phosphoethanolamine + H2O = 1-heptadecanoyl-sn-glycero-3-phosphoethanolamine + (5Z,8Z,11Z,14Z)-eicosatetraenoate + H(+). It carries out the reaction 1-hexadecanoyl-2-(9Z-octadecenoyl)-sn-glycero-3-phospho-(1'-sn-glycerol) + H2O = 1-hexadecanoyl-sn-glycero-3-phospho-(1'-sn-glycerol) + (9Z)-octadecenoate + H(+). The enzyme catalyses Hydrolyzes glycerol monoesters of long-chain fatty acids.. It catalyses the reaction 1-tetradecanoylglycerol + H2O = tetradecanoate + glycerol + H(+). The catalysed reaction is 2-hexadecanoylglycerol + H2O = glycerol + hexadecanoate + H(+). It carries out the reaction 1-(9Z-octadecenoyl)-glycerol + H2O = glycerol + (9Z)-octadecenoate + H(+). The enzyme catalyses 2-(9Z-octadecenoyl)-glycerol + H2O = glycerol + (9Z)-octadecenoate + H(+). It catalyses the reaction 2-(9Z,12Z-octadecadienoyl)-glycerol + H2O = (9Z,12Z)-octadecadienoate + glycerol + H(+). The catalysed reaction is 1-(5Z,8Z,11Z,14Z-eicosatetraenoyl)-glycerol + H2O = glycerol + (5Z,8Z,11Z,14Z)-eicosatetraenoate + H(+). It carries out the reaction 2-(5Z,8Z,11Z,14Z-eicosatetraenoyl)-glycerol + H2O = glycerol + (5Z,8Z,11Z,14Z)-eicosatetraenoate + H(+). The enzyme catalyses prostaglandin D2-1-glycerol ester + H2O = prostaglandin D2 + glycerol + H(+). It catalyses the reaction 2-glyceryl-15-deoxy-Delta(12,14)-prostaglandin J2 + H2O = 15-deoxy-Delta(12,14)-prostaglandin J2 + glycerol + H(+). The catalysed reaction is 1-(9Z,12Z-octadecadienoyl)-glycerol + H2O = (9Z,12Z)-octadecadienoate + glycerol + H(+). Functionally, phosphatidylserine (PS) lipase that mediates the hydrolysis of phosphatidylserine to generate lysophosphatidylserine (LPS). LPS constitutes a class of signaling lipids that regulates immunological and neurological processes. Has no activity towards diacylglycerol, triacylglycerol or lysophosphatidylserine lipase. Also has monoacylglycerol lipase activity, with preference for 1-(9Z,12Z-octadecadienoyl)-glycerol (1-LG) and 2-glyceryl-15-deoxy-Delta(12,14)-prostaglandin J2 (15d-PGJ(2)-G). The protein is Phosphatidylserine lipase ABHD16A of Rattus norvegicus (Rat).